A 764-amino-acid chain; its full sequence is Subtilisin-like protease SBT3.1 (764 aa).

The signal sequence occupies residues methionine 1–serine 32. Residues glycine 33–glutamine 120 constitute a propeptide, activation peptide. An Inhibitor I9 domain is found at valine 41 to lysine 116. A glycan (N-linked (GlcNAc...) asparagine) is linked at asparagine 76. A Peptidase S8 domain is found at threonine 124–threonine 610. The active-site Charge relay system is aspartate 156. Asparagine 216 is a glycosylation site (N-linked (GlcNAc...) asparagine). Histidine 230 (charge relay system) is an active-site residue. Residues asparagine 245 and asparagine 374 are each glycosylated (N-linked (GlcNAc...) asparagine). Residue serine 541 is the Charge relay system of the active site. N-linked (GlcNAc...) asparagine glycosylation is found at asparagine 674, asparagine 711, and asparagine 747.

The protein belongs to the peptidase S8 family.

The protein resides in the secreted. The protein is Subtilisin-like protease SBT3.1 of Arabidopsis thaliana (Mouse-ear cress).